Reading from the N-terminus, the 790-residue chain is Probable copper-transporting ATPase SynA (790 aa).

Topologically, residues 1–105 are cytoplasmic; that stretch reads MPAAIVHSAD…IPPLQQQRLQ (105 aa). In terms of domain architecture, HMA spans 14-81; it reads TSILVEVEGM…EITGLGFRAQ (68 aa). Cys-25 and Cys-28 together coordinate Cu(+). The chain crosses the membrane as a helical span at residues 106-127; sequence LAIAAFLLIVSSWGHLGHWLDH. The Extracellular portion of the chain corresponds to 128–136; the sequence is PLPGTDQLW. A helical transmembrane segment spans residues 137–156; it reads FHALLATWALLGPGRSILQA. The Cytoplasmic portion of the chain corresponds to 157–163; sequence GWQGLRC. The helical transmembrane segment at 164–184 threads the bilayer; that stretch reads GAPNMNSLVLLGTGSAYLASL. Topologically, residues 185 to 198 are extracellular; that stretch reads VALLWPQLGWVCFF. A helical transmembrane segment spans residues 199 to 219; that stretch reads DEPVMLLGFILLGRTLEEQAR. Residues 220-358 lie on the Cytoplasmic side of the membrane; the sequence is FRSQAALQNL…KAPVQRFADA (139 aa). A helical membrane pass occupies residues 359–381; that stretch reads IAGRFVYGVCAIAALTFGFWATL. The Extracellular portion of the chain corresponds to 382–420; it reads GSRWWPQVLQQPLPGLLIHAPHHGMEMAHPHSHSPLLLA. Residues 421 to 438 form a helical membrane-spanning segment; that stretch reads LTLAISVLVVACPCALGL. Residues 439-723 are Cytoplasmic-facing; sequence ATPTAILVAT…NLSQMGLRTI (285 aa). Asp-476 serves as the catalytic 4-aspartylphosphate intermediate. Mg(2+)-binding residues include Asp-669 and Asp-673. Residues 724 to 743 traverse the membrane as a helical segment; that stretch reads RQNLTWALGYNVVMLPLAAG. The Extracellular segment spans residues 744–755; the sequence is AFLPAYGLALTP. Residues 756 to 774 form a helical membrane-spanning segment; it reads AIAGACMAVSSLAVVSNSL. Topologically, residues 775–790 are cytoplasmic; it reads LLRYWFRRSLNHSVSV.

Belongs to the cation transport ATPase (P-type) (TC 3.A.3) family. Type IB subfamily.

It is found in the cell membrane. It catalyses the reaction Cu(+)(in) + ATP + H2O = Cu(+)(out) + ADP + phosphate + H(+). Involved in copper transport. The sequence is that of Probable copper-transporting ATPase SynA (synA) from Synechococcus elongatus (strain ATCC 33912 / PCC 7942 / FACHB-805) (Anacystis nidulans R2).